We begin with the raw amino-acid sequence, 332 residues long: dTDP-3,4-didehydro-2,6-dideoxy-alpha-D-glucose 3-reductase (332 aa).

17–23 is a binding site for NADP(+); it reads CADIAWR. Arginine 24 is a binding site for substrate. NADP(+) contacts are provided by residues 42–43, tyrosine 63, leucine 79, and histidine 84; that span reads SR. The active-site Proton donor is the lysine 102. The NADP(+) site is built by arginine 170 and aspartate 182. Substrate contacts are provided by tyrosine 240 and threonine 260.

It belongs to the Gfo/Idh/MocA family. In terms of assembly, homotetramer; dimer of dimers.

It catalyses the reaction dTDP-4-dehydro-2,6-dideoxy-alpha-D-glucose + NADP(+) = dTDP-3,4-didehydro-2,6-dideoxy-alpha-D-glucose + NADPH + H(+). It participates in antibiotic biosynthesis. Its function is as follows. Involved in the biosynthesis of L-digitoxose, an unusual dideoxysugar attached to various pharmacologically active natural products, including the antitumor antibiotic tetrocarcin A, and the antibiotics kijanimicin and jadomycin B. Catalyzes the reduction of the C-3 keto moiety of dTDP-3,4-diketo-2,6-dideoxy-alpha-D-glucose to yield dTDP-4-keto-2,6-dideoxy-alpha-D-glucose. Also able to reduce dTDP-3-keto-6-deoxy-D-galactose and dTDP-3-keto-6-deoxy-D-glucose to yield dTDP-fucose and dTDP-quinovose, respectively. The chain is dTDP-3,4-didehydro-2,6-dideoxy-alpha-D-glucose 3-reductase from Actinomadura kijaniata.